A 267-amino-acid polypeptide reads, in one-letter code: Collectin-11 (267 aa).

Positions 1–21 are cleaved as a signal peptide; that stretch reads MKRALALMGLAFLCVLRAGAA. Residues 40 to 109 form a disordered region; the sequence is GDAGEKGDKG…GPNGEPGIPC (70 aa). Composition is skewed to basic and acidic residues over residues 41–50 and 62–71; these read DAGEKGDKGA and EKGDVGDKGQ. In terms of domain architecture, Collagen-like spans 49 to 108; that stretch reads GAPGRPGRVGPTGEKGDVGDKGQKGGVGRHGKIGPIGSKGEKGDSGDIGPPGPNGEPGIP. The stretch at 110–144 forms a coiled coil; that stretch reads ECSQLRKAIGEMDNQVTQLTAELKFIKNAVAGVRE. Residues 145 to 261 enclose the C-type lectin domain; the sequence is TEQKMYLLVK…CHLTMHFLCE (117 aa). Cystine bridges form between Cys-166–Cys-260 and Cys-238–Cys-252. Arg-196 contacts a carbohydrate. Ca(2+) contacts are provided by Asp-203, Glu-207, Glu-228, Asn-230, Asn-231, Asp-234, Glu-236, and Asp-237. Glu-236 contacts a carbohydrate. A carbohydrate-binding positions include Glu-240 and 248–250; that span reads NDV. Residues Asn-248 and Asp-249 each coordinate Ca(2+).

This sequence belongs to the COLEC10/COLEC11 family. As to quaternary structure, homotrimer; disulfide-linked. Interacts with MASP1; probably triggers the lectin pathway of complement.

It localises to the secreted. Its function is as follows. Lectin that plays a role in innate immunity, apoptosis and embryogenesis. Calcium-dependent lectin that binds self and non-self glycoproteins presenting high mannose oligosaccharides with at least one terminal alpha-1,2-linked mannose epitope. Primarily recognizes the terminal disaccharide of the glycan. Also recognizes a subset of fucosylated glycans and lipopolysaccharides. Plays a role in innate immunity through its ability to bind non-self sugars presented by microorganisms and to activate the complement through the recruitment of MAPS1. Also plays a role in apoptosis through its ability to bind in a calcium-independent manner the DNA present at the surface of apoptotic cells and to activate the complement in response to this binding. Finally, plays a role in development, probably serving as a guidance cue during the migration of neural crest cells and other cell types during embryogenesis. This chain is Collectin-11 (COLEC11), found in Bos taurus (Bovine).